Reading from the N-terminus, the 291-residue chain is Undecaprenyl-diphosphatase 2 (291 aa).

6 consecutive transmembrane segments (helical) span residues 39–59 (PGAAFTAITQIGTEAAVLIYF), 85–105 (AQMGWLVIVGSIPIGVLGVTL), 118–138 (ITATMLIVMGVILGIADRLAA), 203–223 (FLLAIPAVLASGVFELKDAAA), 231–251 (PTVFATVIAFVSGYAVIAWFM), and 262–282 (FVWYRIALGIAIIALVATGAL).

This sequence belongs to the UppP family.

It localises to the cell membrane. The catalysed reaction is di-trans,octa-cis-undecaprenyl diphosphate + H2O = di-trans,octa-cis-undecaprenyl phosphate + phosphate + H(+). In terms of biological role, catalyzes the dephosphorylation of undecaprenyl diphosphate (UPP). Confers resistance to bacitracin. This is Undecaprenyl-diphosphatase 2 from Streptomyces avermitilis (strain ATCC 31267 / DSM 46492 / JCM 5070 / NBRC 14893 / NCIMB 12804 / NRRL 8165 / MA-4680).